The primary structure comprises 126 residues: Small ribosomal subunit protein uS13 (126 aa).

Positions 91 to 126 (HRAGLPVRGQRTRTNSRTRRSAKRTVAGKKKAPSKK) are disordered. Over residues 100–126 (QRTRTNSRTRRSAKRTVAGKKKAPSKK) the composition is skewed to basic residues.

The protein belongs to the universal ribosomal protein uS13 family. In terms of assembly, part of the 30S ribosomal subunit. Forms a loose heterodimer with protein S19. Forms two bridges to the 50S subunit in the 70S ribosome.

In terms of biological role, located at the top of the head of the 30S subunit, it contacts several helices of the 16S rRNA. In the 70S ribosome it contacts the 23S rRNA (bridge B1a) and protein L5 of the 50S subunit (bridge B1b), connecting the 2 subunits; these bridges are implicated in subunit movement. Contacts the tRNAs in the A and P-sites. The chain is Small ribosomal subunit protein uS13 from Acaryochloris marina (strain MBIC 11017).